The primary structure comprises 379 residues: Galactose-1-phosphate uridylyltransferase (379 aa).

Residues 1 to 10 are compositionally biased toward basic and acidic residues; the sequence is MSHSGADPEQ. Residues 1 to 20 are disordered; the sequence is MSHSGADPEQRQQASEADAM. C75 lines the Zn(2+) pocket. UDP-alpha-D-glucose-binding positions include A81, 97–98, and N173; that span reads ND. A Zn(2+)-binding site is contributed by H184. The Tele-UMP-histidine intermediate role is filled by H186. Q188 is a binding site for UDP-alpha-D-glucose. Residues E202, H301, H319, and H321 each coordinate Zn(2+). Residues 334-337 and 339-340 each bind UDP-alpha-D-glucose; these read KFMV and YE.

The protein belongs to the galactose-1-phosphate uridylyltransferase type 1 family. In terms of assembly, homodimer. Requires Zn(2+) as cofactor.

The enzyme catalyses alpha-D-galactose 1-phosphate + UDP-alpha-D-glucose = alpha-D-glucose 1-phosphate + UDP-alpha-D-galactose. Its pathway is carbohydrate metabolism; galactose metabolism. In terms of biological role, plays an important role in galactose metabolism. The chain is Galactose-1-phosphate uridylyltransferase (Galt) from Mus musculus (Mouse).